Reading from the N-terminus, the 641-residue chain is Lipase (641 aa).

The N-terminal stretch at 1-38 is a signal peptide; it reads MKETKHQHTFSIRKSAYGAASVMVASCIFVIGGGVAEA. Disordered regions lie at residues 41–174 and 206–246; these read STTQ…PSVD and TVSP…KPTV. A compositionally biased stretch (low complexity) spans 53–64; it reads QTSQQETHTHQT. Positions 73 to 94 are enriched in basic and acidic residues; it reads TPEHVDDSKEATPLPEKAESPK. 2 stretches are compositionally biased toward polar residues: residues 95-106 and 127-139; these read TEVTVQPSSHTQ and PEST…VESN. The span at 140 to 165 shows a compositional bias: basic and acidic residues; it reads KATENEMSPVEHHASNVEKREDRLET. Positions 227 to 239 are enriched in polar residues; it reads ENTTAQNKFTSQA. The active-site Nucleophile is the Ser369. A Ca(2+)-binding site is contributed by Gly535. Residue Asp559 is the Charge relay system of the active site. Asp599 provides a ligand contact to Ca(2+). Residue His600 is the Charge relay system of the active site. Ca(2+)-binding residues include Asp602, Asp607, and Asp610.

This sequence belongs to the AB hydrolase superfamily. Lipase family. The cofactor is Ca(2+).

Its subcellular location is the secreted. The catalysed reaction is a triacylglycerol + H2O = a diacylglycerol + a fatty acid + H(+). It carries out the reaction a 1,2-diacyl-sn-glycero-3-phosphocholine + H2O = a 2-acyl-sn-glycero-3-phosphocholine + a fatty acid + H(+). Has a broad substrate specificity hydrolyzing a variety of triglycerides and phosphatidylcholines. This Staphylococcus hyicus protein is Lipase (lip).